A 264-amino-acid chain; its full sequence is Phosphonoacetaldehyde hydrolase (264 aa).

Catalysis depends on D10, which acts as the Nucleophile. 2 residues coordinate Mg(2+): D10 and A12. Catalysis depends on K52, which acts as the Schiff-base intermediate with substrate. Residue D185 coordinates Mg(2+).

It belongs to the HAD-like hydrolase superfamily. PhnX family. In terms of assembly, homodimer. Mg(2+) is required as a cofactor.

The enzyme catalyses phosphonoacetaldehyde + H2O = acetaldehyde + phosphate + H(+). Its function is as follows. Involved in phosphonate degradation. The protein is Phosphonoacetaldehyde hydrolase of Parabacteroides distasonis (strain ATCC 8503 / DSM 20701 / CIP 104284 / JCM 5825 / NCTC 11152).